The chain runs to 123 residues: Sterol carrier protein 2 (123 aa).

Residues lysine 16–threonine 113 enclose the SCP2 domain. Positions serine 121–leucine 123 match the Microbody targeting signal motif.

In terms of tissue distribution, expressed in most tissues including seedlings, cotyledons, inflorescence, leaves, stems, roots, siliques and flower buds, with the highest levels in floral tissues and in maturing seeds.

It is found in the peroxisome. In terms of biological role, enhances the transfer of lipids between membranes in vitro. Active on phosphatidylcholine (PC), 1-palmitoyl 2-oleoyl phosphatidylcholine (POPC) and ergosterol, and, to a lower extent, dimyristoyl phosphatidic acid, stigmasterol, desmosterol, beta-sitosterol and steryl glucoside. Inactive or poorly active on palmitic acid, stearoyl-coenzyme A, cholesterol, glucosylceramide and ceramide. Required during seeds and seedlings development. This Arabidopsis thaliana (Mouse-ear cress) protein is Sterol carrier protein 2.